A 301-amino-acid polypeptide reads, in one-letter code: Negative regulator of the PHO system (301 aa).

One can recognise a Protein kinase domain in the interval 7 to 297 (FKQLERLGNG…AQQALSHPLF (291 aa)). ATP-binding positions include 13–21 (LGNGTYATV) and lysine 36. Aspartate 133 serves as the catalytic Proton acceptor.

The protein belongs to the protein kinase superfamily. CMGC Ser/Thr protein kinase family. CDC2/CDKX subfamily. As to quaternary structure, interacts with a number of cyclins.

The catalysed reaction is L-seryl-[protein] + ATP = O-phospho-L-seryl-[protein] + ADP + H(+). The enzyme catalyses L-threonyl-[protein] + ATP = O-phospho-L-threonyl-[protein] + ADP + H(+). Functionally, when phosphate concentrations are high it phosphorylates the PHO4 transcription factor thus establishing repression. The protein is Negative regulator of the PHO system (PHO85) of Eremothecium gossypii (strain ATCC 10895 / CBS 109.51 / FGSC 9923 / NRRL Y-1056) (Yeast).